Consider the following 125-residue polypeptide: Large ribosomal subunit protein bL12 (125 aa).

It belongs to the bacterial ribosomal protein bL12 family. Homodimer. Part of the ribosomal stalk of the 50S ribosomal subunit. Forms a multimeric L10(L12)X complex, where L10 forms an elongated spine to which 2 to 4 L12 dimers bind in a sequential fashion. Binds GTP-bound translation factors.

Functionally, forms part of the ribosomal stalk which helps the ribosome interact with GTP-bound translation factors. Is thus essential for accurate translation. The chain is Large ribosomal subunit protein bL12 from Cereibacter sphaeroides (Rhodobacter sphaeroides).